Reading from the N-terminus, the 194-residue chain is Large ribosomal subunit protein uL18 (194 aa).

The protein belongs to the universal ribosomal protein uL18 family. Part of the 50S ribosomal subunit. Contacts the 5S and 23S rRNAs.

In terms of biological role, this is one of the proteins that bind and probably mediate the attachment of the 5S RNA into the large ribosomal subunit, where it forms part of the central protuberance. This Methanococcus aeolicus (strain ATCC BAA-1280 / DSM 17508 / OCM 812 / Nankai-3) protein is Large ribosomal subunit protein uL18.